A 306-amino-acid polypeptide reads, in one-letter code: Recombination-associated protein RdgC (306 aa).

The protein belongs to the RdgC family.

The protein resides in the cytoplasm. It is found in the nucleoid. Its function is as follows. May be involved in recombination. The polypeptide is Recombination-associated protein RdgC (Burkholderia ambifaria (strain MC40-6)).